The primary structure comprises 525 residues: GMP synthase [glutamine-hydrolyzing] (525 aa).

The Glutamine amidotransferase type-1 domain maps to 9 to 207 (RILILDFGSQ…VRDICQCEAL (199 aa)). C86 serves as the catalytic Nucleophile. Active-site residues include H181 and E183. A GMPS ATP-PPase domain is found at 208–400 (WTPAKIIDDA…LGLPYDMLYR (193 aa)). 235–241 (SGGVDSS) serves as a coordination point for ATP.

As to quaternary structure, homodimer.

It carries out the reaction XMP + L-glutamine + ATP + H2O = GMP + L-glutamate + AMP + diphosphate + 2 H(+). Its pathway is purine metabolism; GMP biosynthesis; GMP from XMP (L-Gln route): step 1/1. Catalyzes the synthesis of GMP from XMP. In Escherichia coli O8 (strain IAI1), this protein is GMP synthase [glutamine-hydrolyzing].